Consider the following 227-residue polypeptide: NADH-quinone oxidoreductase subunit C (227 aa).

The protein belongs to the complex I 30 kDa subunit family. As to quaternary structure, NDH-1 is composed of 14 different subunits. Subunits NuoB, C, D, E, F, and G constitute the peripheral sector of the complex.

The protein localises to the cell inner membrane. The enzyme catalyses a quinone + NADH + 5 H(+)(in) = a quinol + NAD(+) + 4 H(+)(out). NDH-1 shuttles electrons from NADH, via FMN and iron-sulfur (Fe-S) centers, to quinones in the respiratory chain. The immediate electron acceptor for the enzyme in this species is believed to be ubiquinone. Couples the redox reaction to proton translocation (for every two electrons transferred, four hydrogen ions are translocated across the cytoplasmic membrane), and thus conserves the redox energy in a proton gradient. In Legionella pneumophila subsp. pneumophila (strain Philadelphia 1 / ATCC 33152 / DSM 7513), this protein is NADH-quinone oxidoreductase subunit C.